We begin with the raw amino-acid sequence, 465 residues long: Cysteine--tRNA ligase (465 aa).

Cys28 contributes to the Zn(2+) binding site. A 'HIGH' region motif is present at residues 30–40; that stretch reads MTVYDYCHLGH. Residues Cys209, His234, and Glu238 each contribute to the Zn(2+) site. A 'KMSKS' region motif is present at residues 266–270; sequence KMSKS. Lys269 is an ATP binding site.

Belongs to the class-I aminoacyl-tRNA synthetase family. As to quaternary structure, monomer. The cofactor is Zn(2+).

The protein localises to the cytoplasm. The catalysed reaction is tRNA(Cys) + L-cysteine + ATP = L-cysteinyl-tRNA(Cys) + AMP + diphosphate. This is Cysteine--tRNA ligase from Nitrosomonas europaea (strain ATCC 19718 / CIP 103999 / KCTC 2705 / NBRC 14298).